The chain runs to 303 residues: N-acetyl-D-glucosamine kinase (303 aa).

ATP is bound by residues 4 to 11 and 133 to 140; these read GFDIGGTK and GVGGGLIF. Residues His157, Cys177, Cys179, and Cys184 each contribute to the Zn(2+) site.

The protein belongs to the ROK (NagC/XylR) family. NagK subfamily.

The enzyme catalyses N-acetyl-D-glucosamine + ATP = N-acetyl-D-glucosamine 6-phosphate + ADP + H(+). Its pathway is cell wall biogenesis; peptidoglycan recycling. Functionally, catalyzes the phosphorylation of N-acetyl-D-glucosamine (GlcNAc) derived from cell-wall degradation, yielding GlcNAc-6-P. The protein is N-acetyl-D-glucosamine kinase of Shigella boydii serotype 4 (strain Sb227).